The sequence spans 309 residues: Ubiquitin-conjugating enzyme E2 32 (309 aa).

Residues 11–166 enclose the UBC core domain; that stretch reads PAVKRILQEV…ERQKIIDEIH (156 aa). Cys93 acts as the Glycyl thioester intermediate in catalysis. The helical transmembrane segment at 275–295 threads the bilayer; it reads FTWAAVGLTIAIMVLLLKKFI.

This sequence belongs to the ubiquitin-conjugating enzyme family.

It is found in the membrane. The enzyme catalyses S-ubiquitinyl-[E1 ubiquitin-activating enzyme]-L-cysteine + [E2 ubiquitin-conjugating enzyme]-L-cysteine = [E1 ubiquitin-activating enzyme]-L-cysteine + S-ubiquitinyl-[E2 ubiquitin-conjugating enzyme]-L-cysteine.. It participates in protein modification; protein ubiquitination. Accepts the ubiquitin from the E1 complex and catalyzes its covalent attachment to other proteins. This Arabidopsis thaliana (Mouse-ear cress) protein is Ubiquitin-conjugating enzyme E2 32 (UBC32).